The following is a 238-amino-acid chain: Transcriptional activator HAC1 (238 aa).

The segment at 1 to 39 (MEMTDFELTSNSQSNLAIPTNFKSTLPPRKRAKTKEEKE) is disordered. The span at 7–24 (ELTSNSQSNLAIPTNFKS) shows a compositional bias: polar residues. The bZIP domain occupies 39–102 (EQRRIERILR…LTCSHDAFVA (64 aa)). The basic motif stretch occupies residues 41–61 (RRIERILRNRRAAHQSREKKR). The tract at residues 67–74 (LERKCSLL) is leucine-zipper. The segment at 115–152 (GASLDTRASSHSSSDTFTPSPLNCTMEPATLSPKSMRD) is disordered. Over residues 117-134 (SLDTRASSHSSSDTFTPS) the composition is skewed to low complexity.

Belongs to the bZIP family. As to quaternary structure, homodimer.

The protein localises to the nucleus. Its function is as follows. Transcriptional activator involved in the unfolded protein response (UPR) pathway. Recognizes and binds to the UPR element (UPRE) in the promoter of UPR-regulated genes such as KAR2, PDI1, EUG1 and FKB2. Increases the synthesis of endoplasmic reticulum-resident proteins required for protein folding as well as components of the secretory pathway. This is Transcriptional activator HAC1 (HAC1) from Saccharomyces cerevisiae (strain ATCC 204508 / S288c) (Baker's yeast).